We begin with the raw amino-acid sequence, 317 residues long: SWI/SNF-related matrix-associated actin-dependent regulator of chromatin subfamily E member 1-related (317 aa).

The segment covering 1 to 22 (MSHGPKQPGAASAPASGKAPGQ) has biased composition (low complexity). Positions 1–71 (MSHGPKQPGA…RKKILPNGPK (71 aa)) are disordered. A Glycyl lysine isopeptide (Lys-Gly) (interchain with G-Cter in SUMO2) cross-link involves residue lysine 31. A compositionally biased stretch (basic and acidic residues) spans 31-52 (KQERGEGPRAGEKGSHEEEPVK). The segment covering 53–65 (KRGWPKGKKRKKI) has biased composition (basic residues). Residues 70–138 (PKAPVTGYVR…QYMKELRAYQ (69 aa)) constitute a DNA-binding region (HMG box). Serine 160 bears the Phosphoserine mark. Positions 190 to 257 (EEFLDQNKAR…LQQQLQAVRQ (68 aa)) form a coiled coil.

In terms of assembly, component of a BHC histone deacetylase complex that contains HDAC1, HDAC2, HMG20B/BRAF35, KDM1A, RCOR1/CoREST and PHF21A/BHC80. The BHC complex may also contain ZMYM2, ZNF217, ZMYM3, GSE1 and GTF2I. Interacts with the BRCA2 tumor suppressor protein.

The protein resides in the nucleus. The protein localises to the chromosome. Functionally, required for correct progression through G2 phase of the cell cycle and entry into mitosis. Required for RCOR1/CoREST mediated repression of neuronal specific gene promoters. This is SWI/SNF-related matrix-associated actin-dependent regulator of chromatin subfamily E member 1-related (HMG20B) from Bos taurus (Bovine).